Reading from the N-terminus, the 367-residue chain is Peptide chain release factor 2 (367 aa).

Q249 is modified (N5-methylglutamine).

It belongs to the prokaryotic/mitochondrial release factor family. In terms of processing, methylated by PrmC. Methylation increases the termination efficiency of RF2.

It is found in the cytoplasm. Peptide chain release factor 2 directs the termination of translation in response to the peptide chain termination codons UGA and UAA. The chain is Peptide chain release factor 2 from Thermotoga petrophila (strain ATCC BAA-488 / DSM 13995 / JCM 10881 / RKU-1).